The following is a 320-amino-acid chain: 4-diphosphocytidyl-2-C-methyl-D-erythritol kinase (320 aa).

K20 is a catalytic residue. Position 112-122 (112-122 (PVAGGMGGGSA)) interacts with ATP. D154 is a catalytic residue.

The protein belongs to the GHMP kinase family. IspE subfamily.

It catalyses the reaction 4-CDP-2-C-methyl-D-erythritol + ATP = 4-CDP-2-C-methyl-D-erythritol 2-phosphate + ADP + H(+). It functions in the pathway isoprenoid biosynthesis; isopentenyl diphosphate biosynthesis via DXP pathway; isopentenyl diphosphate from 1-deoxy-D-xylulose 5-phosphate: step 3/6. Catalyzes the phosphorylation of the position 2 hydroxy group of 4-diphosphocytidyl-2C-methyl-D-erythritol. This is 4-diphosphocytidyl-2-C-methyl-D-erythritol kinase from Pseudarthrobacter chlorophenolicus (strain ATCC 700700 / DSM 12829 / CIP 107037 / JCM 12360 / KCTC 9906 / NCIMB 13794 / A6) (Arthrobacter chlorophenolicus).